A 505-amino-acid polypeptide reads, in one-letter code: Lysine--tRNA ligase (505 aa).

A compositionally biased stretch (polar residues) spans 1–11; it reads MSDQQLDQPSL. A disordered region spans residues 1 to 23; the sequence is MSDQQLDQPSLSHEERQHEENKL. Over residues 12–23 the composition is skewed to basic and acidic residues; sequence SHEERQHEENKL. Mg(2+) is bound by residues glutamate 415 and glutamate 422.

It belongs to the class-II aminoacyl-tRNA synthetase family. In terms of assembly, homodimer. Mg(2+) is required as a cofactor.

The protein resides in the cytoplasm. The catalysed reaction is tRNA(Lys) + L-lysine + ATP = L-lysyl-tRNA(Lys) + AMP + diphosphate. This chain is Lysine--tRNA ligase, found in Ectopseudomonas mendocina (strain ymp) (Pseudomonas mendocina).